Reading from the N-terminus, the 329-residue chain is 4-hydroxythreonine-4-phosphate dehydrogenase (329 aa).

Residues H136 and T137 each coordinate substrate. A divalent metal cation contacts are provided by H166, H211, and H266. K274, N283, and R292 together coordinate substrate.

This sequence belongs to the PdxA family. In terms of assembly, homodimer. Requires Zn(2+) as cofactor. Mg(2+) serves as cofactor. It depends on Co(2+) as a cofactor.

Its subcellular location is the cytoplasm. It catalyses the reaction 4-(phosphooxy)-L-threonine + NAD(+) = 3-amino-2-oxopropyl phosphate + CO2 + NADH. The protein operates within cofactor biosynthesis; pyridoxine 5'-phosphate biosynthesis; pyridoxine 5'-phosphate from D-erythrose 4-phosphate: step 4/5. Functionally, catalyzes the NAD(P)-dependent oxidation of 4-(phosphooxy)-L-threonine (HTP) into 2-amino-3-oxo-4-(phosphooxy)butyric acid which spontaneously decarboxylates to form 3-amino-2-oxopropyl phosphate (AHAP). This is 4-hydroxythreonine-4-phosphate dehydrogenase from Escherichia coli O6:H1 (strain CFT073 / ATCC 700928 / UPEC).